The sequence spans 197 residues: Imidazoleglycerol-phosphate dehydratase (197 aa).

This sequence belongs to the imidazoleglycerol-phosphate dehydratase family.

It localises to the cytoplasm. The catalysed reaction is D-erythro-1-(imidazol-4-yl)glycerol 3-phosphate = 3-(imidazol-4-yl)-2-oxopropyl phosphate + H2O. It functions in the pathway amino-acid biosynthesis; L-histidine biosynthesis; L-histidine from 5-phospho-alpha-D-ribose 1-diphosphate: step 6/9. In Marinobacter nauticus (strain ATCC 700491 / DSM 11845 / VT8) (Marinobacter aquaeolei), this protein is Imidazoleglycerol-phosphate dehydratase.